A 288-amino-acid polypeptide reads, in one-letter code: Heme oxygenase 1 (288 aa).

Residues 1–265 are Cytoplasmic-facing; that stretch reads MERPQPDSMP…KTPLNTHSQA (265 aa). 4 residues coordinate heme b: K18, H25, Y134, and R183. A disordered region spans residues 223 to 260; that stretch reads HDTKDQSPSRAPGLRQRASNKAQDSAPVETPRGKTPLN. S229 carries the phosphoserine modification. A helical; Anchor for type IV membrane protein membrane pass occupies residues 266-288; that stretch reads PLLRWVLTLSFLVATVAVGLYAM.

It belongs to the heme oxygenase family. In terms of assembly, homodimer and higher order homooligomer. Oligomerization is crucial for its stability and function in the endoplasmic reticulum. Interacts with FLVCR2; this interaction is potentiated in the presence of heme. A soluble form arises by proteolytic removal of the membrane anchor.

The protein resides in the endoplasmic reticulum membrane. It carries out the reaction heme b + 3 reduced [NADPH--hemoprotein reductase] + 3 O2 = biliverdin IXalpha + CO + Fe(2+) + 3 oxidized [NADPH--hemoprotein reductase] + 3 H2O + H(+). In terms of biological role, catalyzes the oxidative cleavage of heme at the alpha-methene bridge carbon, released as carbon monoxide (CO), to generate biliverdin IXalpha, while releasing the central heme iron chelate as ferrous iron. Affords protection against programmed cell death and this cytoprotective effect relies on its ability to catabolize free heme and prevent it from sensitizing cells to undergo apoptosis. Its function is as follows. Catalyzes the oxidative cleavage of heme at the alpha-methene bridge carbon, released as carbon monoxide (CO), to generate biliverdin IXalpha, while releasing the central heme iron chelate as ferrous iron. The chain is Heme oxygenase 1 (HMOX1) from Pongo abelii (Sumatran orangutan).